The sequence spans 440 residues: D-serine dehydratase (440 aa).

Lys-116 is modified (N6-(pyridoxal phosphate)lysine).

Belongs to the serine/threonine dehydratase family. DsdA subfamily. As to quaternary structure, monomer. The cofactor is pyridoxal 5'-phosphate.

The catalysed reaction is D-serine = pyruvate + NH4(+). This is D-serine dehydratase from Salmonella dublin (strain CT_02021853).